The sequence spans 563 residues: Alpha-humulene synthase (563 aa).

Mg(2+)-binding residues include Asp316, Asp320, Asp461, and Glu469. The DDXXD motif motif lies at 316 to 320 (DDIYD).

Belongs to the terpene synthase family. Tpsa subfamily. It depends on Mg(2+) as a cofactor. Mn(2+) serves as cofactor. Expressed in trichomes, cones and young leaves.

The enzyme catalyses (2E,6E)-farnesyl diphosphate = alpha-humulene + diphosphate. It functions in the pathway sesquiterpene biosynthesis. Its pathway is secondary metabolite biosynthesis; terpenoid biosynthesis. In terms of biological role, sesquiterpene synthase that catalyzes the formation of alpha-humulene. Can use farnesyl diphosphate (FPP) as substrate, but not geranyl diphosphate (GPP) or geranylgeranyl diphosphate (GGPP). The protein is Alpha-humulene synthase of Humulus lupulus (European hop).